The primary structure comprises 332 residues: DNA packaging protein (332 aa).

The segment at 1–207 is ATPase; that stretch reads MDKSLFYNPQ…SERRKTRFGR (207 aa). 24-31 lines the ATP pocket; the sequence is GARGIGKS. The segment at 233-332 is DNA-binding; it reads KRSKDSKFVF…YELFRKMRIQ (100 aa).

It belongs to the phi29likevirus gp16 family. As to quaternary structure, homopentamer. Interacts with the packaging RNA (pRNA). Part of a DNA-gp3-gp16 complex.

It carries out the reaction ATP + H2O = ADP + phosphate + H(+). In terms of biological role, ATPase required for the genome encapsidation reaction. Part of the active packaging motor via the binding to the packaging RNA (pRNA), itself fixed to the head-tail connector at the unique portal vertex of the prohead. Binds and supercoils the pre-formed, unit-length DNA bound to gp3 to produce an initiation complex for DNA packaging. Provides the energy to actively pump the viral DNA into the prohead. Approximately one molecule of ATP is used in the packaging of 2 bp of viral DNA. ATP hydrolysis results in a conformational change that causes the arginine/lysine finger of one subunit to move into the active site of its neighbor, where it interacts with the negatively charged oxygens on the gamma-phosphate of ATP. After packaging, the ATPase and the pRNA are released from the prohead. This chain is DNA packaging protein (16), found in Bacillus subtilis (Bacteriophage PZA).